A 124-amino-acid polypeptide reads, in one-letter code: Putative melanoma-associated antigen 5P (124 aa).

A compositionally biased stretch (basic and acidic residues) spans 1–14 (MSLEQKSQHCKPEE). Disordered regions lie at residues 1 to 69 (MSLE…QGAS) and 82 to 103 (QSIKGSSNQEEEGPSTSPDPES). An MAGE domain is found at 3–124 (LEQKSQHCKP…DLIHFLLLKY (122 aa)). 2 stretches are compositionally biased toward polar residues: residues 30–44 (AATTEEQEAVSSSSP) and 82–100 (QSIKGSSNQEEEGPSTSPD).

As to expression, expressed in many tumors of several types, such as melanoma, head and neck squamous cell carcinoma, lung carcinoma and breast carcinoma, but not in normal tissues except for testes.

In terms of biological role, may negatively regulates apoptosis. The chain is Putative melanoma-associated antigen 5P from Homo sapiens (Human).